Reading from the N-terminus, the 1437-residue chain is Protein CC2D2B (1437 aa).

In Homo sapiens (Human), this protein is Protein CC2D2B.